The sequence spans 541 residues: uncharacterized protein (541 aa).

The next 5 helical transmembrane spans lie at 10 to 32 (LNNQIFLLLLITLIGMTIGKINI), 39 to 57 (SSAIIFVGLFFGHFGYTLP), 62 to 84 (TLGLVLFIYSIGLQAGPGFFFSL), 91 to 113 (LSLGTVAIIGIGFLTTLATTYLF), and 146 to 168 (APAAYGVTYFFGIVGVIVFIQII). RCK C-terminal domains follow at residues 183–260 (LNKE…DDLE) and 268–352 (TPVD…IFGN). A run of 6 helical transmembrane segments spans residues 357–375 (SYNFNILPIFTGLFLGFIL), 385–407 (SGIFYLGTTGGVLIAGLFLSNIY), 428–447 (GLVLFMATIGTQTGTSILAT), 452–474 (GLQLSLAGILVTTVPLISSVFIC), 481–500 (PFLSMLGVITGAMTSTPGLA), and 515–537 (YATVYPVALISMIIYTKLLIFIV).

The protein belongs to the AAE transporter (TC 2.A.81) family.

The protein localises to the cell membrane. This is an uncharacterized protein from Desulfotalea psychrophila (strain LSv54 / DSM 12343).